We begin with the raw amino-acid sequence, 317 residues long: Tyrosine--tRNA ligase (317 aa).

Tyr-33 is an L-tyrosine binding site. The 'HIGH' region motif lies at Pro-38–His-46. The L-tyrosine site is built by Tyr-155, Gln-159, Asp-162, and Gln-177. The 'KMSKS' region signature appears at Lys-211–Ser-215. Ser-214 is a binding site for ATP.

The protein belongs to the class-I aminoacyl-tRNA synthetase family. TyrS type 3 subfamily. Homodimer.

It localises to the cytoplasm. It catalyses the reaction tRNA(Tyr) + L-tyrosine + ATP = L-tyrosyl-tRNA(Tyr) + AMP + diphosphate + H(+). Functionally, catalyzes the attachment of tyrosine to tRNA(Tyr) in a two-step reaction: tyrosine is first activated by ATP to form Tyr-AMP and then transferred to the acceptor end of tRNA(Tyr). The sequence is that of Tyrosine--tRNA ligase from Methanosarcina acetivorans (strain ATCC 35395 / DSM 2834 / JCM 12185 / C2A).